Consider the following 593-residue polypeptide: UvrABC system protein C (593 aa).

Positions Thr-13–Val-91 constitute a GIY-YIG domain. The UVR domain occupies Asp-202–Ile-237.

It belongs to the UvrC family. Interacts with UvrB in an incision complex.

The protein resides in the cytoplasm. Its function is as follows. The UvrABC repair system catalyzes the recognition and processing of DNA lesions. UvrC both incises the 5' and 3' sides of the lesion. The N-terminal half is responsible for the 3' incision and the C-terminal half is responsible for the 5' incision. This chain is UvrABC system protein C, found in Caldicellulosiruptor saccharolyticus (strain ATCC 43494 / DSM 8903 / Tp8T 6331).